The chain runs to 291 residues: LKAMDPTPPLWIKTESPSTPWTNVTLLCVATNTEELSFQVWKDGELLSTLPVVGLVGKFWLGPVTADNRGIYRCRILTSENDWTPLSAPVEVTGKEPLPAPSLHAEPGPWILPGLETKLHCRGMLLGMIFDLYQEGEQEPVKSSQTPSAEATFIVNSTGNYSCLYRAPASAPSVNSTPSETIHVVIPDFLPKANFYILNDRDFRPGDIVTFSCWARFSEREYDLEFKLFKDGQETPVEVVPISDPMKVFFDLTAVGPKDGGKYSCRYRFRNGPPIWSEDSNVLELDLSTGQ.

Ig-like V-type domains are found at residues 22–79 and 114–171; these read TNVT…ILTS and GLET…PASA. N-linked (GlcNAc...) asparagine glycosylation is present at N23. Intrachain disulfides connect C28–C74 and C121–C163. N-linked (GlcNAc...) asparagine glycans are attached at residues N156, N160, and N175. One can recognise an Ig-like V-type 3 domain in the interval 191 to 288; that stretch reads PKANFYILND…DSNVLELDLS (98 aa). Cysteines 213 and 265 form a disulfide.

As to quaternary structure, homodimer. In terms of processing, N-glycosylated. In terms of tissue distribution, blood and milk.

Metalloproteinase inhibitor. In Didelphis marsupialis (Southern opossum), this protein is Venom metalloproteinase inhibitor DM43.